The primary structure comprises 380 residues: Chaperone protein DnaJ (380 aa).

One can recognise a J domain in the interval 5–70 (DFYEVLGVSR…QKRAAYDQYG (66 aa)). The segment at 135 to 213 (GCEKDIEIPT…CHGDGRVQKT (79 aa)) adopts a CR-type zinc-finger fold. Residues Cys-148, Cys-151, Cys-165, Cys-168, Cys-187, Cys-190, Cys-201, and Cys-204 each contribute to the Zn(2+) site. 4 CXXCXGXG motif repeats span residues 148–155 (CEPCDGTG), 165–172 (CSTCHGQG), 187–194 (CPTCHGKG), and 201–208 (CNSCHGDG).

Belongs to the DnaJ family. In terms of assembly, homodimer. Zn(2+) is required as a cofactor.

The protein resides in the cytoplasm. Its function is as follows. Participates actively in the response to hyperosmotic and heat shock by preventing the aggregation of stress-denatured proteins and by disaggregating proteins, also in an autonomous, DnaK-independent fashion. Unfolded proteins bind initially to DnaJ; upon interaction with the DnaJ-bound protein, DnaK hydrolyzes its bound ATP, resulting in the formation of a stable complex. GrpE releases ADP from DnaK; ATP binding to DnaK triggers the release of the substrate protein, thus completing the reaction cycle. Several rounds of ATP-dependent interactions between DnaJ, DnaK and GrpE are required for fully efficient folding. Also involved, together with DnaK and GrpE, in the DNA replication of plasmids through activation of initiation proteins. The sequence is that of Chaperone protein DnaJ from Aliivibrio salmonicida (strain LFI1238) (Vibrio salmonicida (strain LFI1238)).